A 362-amino-acid polypeptide reads, in one-letter code: MIIKSIQLSNFRNYEKLDISFDTETNIIYGDNAQGKTNILEAAYLSGTTKSHKGSKDKEMIRFGEDEAHIRTIVEKNDKEYRIDMHLRKNGAKGVAINKMPIKKASELFGILNIVFFSPEDLNIIKNGPAERRRFIDLELCQLDKIYLSNLSKYNKTLVQRNRLLKDIAYRPDLIDTLQVWDMQLLEYGRHVIKKRREFVNELNEIIQDIHSNISGGREKLILKYEPSIDDIFFEDELLKARSRDLKLCQTTVGPHRDDMLFSVDGVDIRKYGSQGQQRTSALSLKLSEISLVKKNINSTPVLLLDDVLSELDGNRQNYLLNSLSDTQTIITCTGLDEFVKNRFQVDKVFHVVKGQVEVIDE.

Position 30-37 (30-37 (GDNAQGKT)) interacts with ATP.

The protein belongs to the RecF family.

The protein localises to the cytoplasm. Its function is as follows. The RecF protein is involved in DNA metabolism; it is required for DNA replication and normal SOS inducibility. RecF binds preferentially to single-stranded, linear DNA. It also seems to bind ATP. The sequence is that of DNA replication and repair protein RecF from Agathobacter rectalis (strain ATCC 33656 / DSM 3377 / JCM 17463 / KCTC 5835 / VPI 0990) (Eubacterium rectale).